The chain runs to 142 residues: Deoxyuridine 5'-triphosphate nucleotidohydrolase (142 aa).

Substrate-binding positions include 62–64, Asn-75, 79–81, and Lys-89; these read RSG and TID.

It belongs to the dUTPase family. The cofactor is Mg(2+).

It catalyses the reaction dUTP + H2O = dUMP + diphosphate + H(+). It participates in pyrimidine metabolism; dUMP biosynthesis; dUMP from dCTP (dUTP route): step 2/2. This enzyme is involved in nucleotide metabolism: it produces dUMP, the immediate precursor of thymidine nucleotides and it decreases the intracellular concentration of dUTP so that uracil cannot be incorporated into DNA. The polypeptide is Deoxyuridine 5'-triphosphate nucleotidohydrolase (Nautilia profundicola (strain ATCC BAA-1463 / DSM 18972 / AmH)).